We begin with the raw amino-acid sequence, 79 residues long: uncharacterized protein (79 aa).

Over residues 22–72 (NNNNNNNNNNNNNNNNNNNNNNNNNNNNNNNNNNNNNNNNNNNNNNNNNNN) the composition is skewed to low complexity. The disordered stretch occupies residues 22-79 (NNNNNNNNNNNNNNNNNNNNNNNNNNNNNNNNNNNNNNNNNNNNNNNNNNNKRFFFFG).

This is an uncharacterized protein from Dictyostelium discoideum (Social amoeba).